The following is a 414-amino-acid chain: Esterase FrsA (414 aa).

The protein belongs to the FrsA family.

It catalyses the reaction a carboxylic ester + H2O = an alcohol + a carboxylate + H(+). In terms of biological role, catalyzes the hydrolysis of esters. The chain is Esterase FrsA from Salmonella dublin (strain CT_02021853).